The primary structure comprises 309 residues: Voltage-dependent anion channel-forming protein mll4386 (309 aa).

A run of 3 helical transmembrane segments spans residues 32 to 52 (ILPQ…LARW), 58 to 78 (GVFN…YLSF), and 227 to 247 (IVCL…TPLF).

This sequence belongs to the anion channel-forming bestrophin (TC 1.A.46) family.

It localises to the cell membrane. This Mesorhizobium japonicum (strain LMG 29417 / CECT 9101 / MAFF 303099) (Mesorhizobium loti (strain MAFF 303099)) protein is Voltage-dependent anion channel-forming protein mll4386.